The following is a 304-amino-acid chain: Oxygen-dependent coproporphyrinogen-III oxidase (304 aa).

Ser94 is a substrate binding site. 2 residues coordinate a divalent metal cation: His98 and His108. Catalysis depends on His108, which acts as the Proton donor. 110 to 112 (NVR) contacts substrate. A divalent metal cation contacts are provided by His147 and His177. The segment at 242–277 (YVEFNLVYDRGTLFGLQTGGRTESILMSMPPLVRWQ) is important for dimerization. Position 260–262 (260–262 (GGR)) interacts with substrate.

The protein belongs to the aerobic coproporphyrinogen-III oxidase family. Homodimer. A divalent metal cation serves as cofactor.

It is found in the cytoplasm. The enzyme catalyses coproporphyrinogen III + O2 + 2 H(+) = protoporphyrinogen IX + 2 CO2 + 2 H2O. Its pathway is porphyrin-containing compound metabolism; protoporphyrin-IX biosynthesis; protoporphyrinogen-IX from coproporphyrinogen-III (O2 route): step 1/1. Functionally, involved in the heme biosynthesis. Catalyzes the aerobic oxidative decarboxylation of propionate groups of rings A and B of coproporphyrinogen-III to yield the vinyl groups in protoporphyrinogen-IX. The sequence is that of Oxygen-dependent coproporphyrinogen-III oxidase from Shewanella amazonensis (strain ATCC BAA-1098 / SB2B).